We begin with the raw amino-acid sequence, 487 residues long: 3-ketoacyl-CoA synthase 17 (487 aa).

A run of 2 helical transmembrane segments spans residues 23 to 43 (LITHFFKLMFLPLMAVLFMNV) and 57 to 77 (STGFIFVITLAIVGSIVFFMS). In terms of domain architecture, FAE spans 74–363 (FFMSRPRSIY…FFATFVAKRL (290 aa)). Catalysis depends on residues cysteine 218, histidine 297, histidine 382, histidine 386, histidine 415, and asparagine 419.

This sequence belongs to the thiolase-like superfamily. Chalcone/stilbene synthases family. As to expression, expressed in flowers.

The protein localises to the membrane. It carries out the reaction a very-long-chain acyl-CoA + malonyl-CoA + H(+) = a very-long-chain 3-oxoacyl-CoA + CO2 + CoA. It functions in the pathway lipid metabolism; fatty acid biosynthesis. With respect to regulation, inhibited by K3 herbicides such as alachlor, allidochlor, anilofos, cafenstrole, fentrazamide and flufenacet. Strongly inhibited by metazachlor. Its function is as follows. Active on saturated acyl-CoAs up to C22. Mediates the synthesis of VLCFAs from 20 to 26 carbons in length (e.g. C20:1, C20, C24, C26). The protein is 3-ketoacyl-CoA synthase 17 of Arabidopsis thaliana (Mouse-ear cress).